The sequence spans 382 residues: Queuine tRNA-ribosyltransferase (382 aa).

The active-site Proton acceptor is D93. Residues D93 to F97, D147, Q191, and G218 each bind substrate. Residues G249–D255 are RNA binding. The active-site Nucleophile is D268. The interval T273–R277 is RNA binding; important for wobble base 34 recognition. Residues C306, C308, C311, and H337 each coordinate Zn(2+).

This sequence belongs to the queuine tRNA-ribosyltransferase family. As to quaternary structure, homodimer. Within each dimer, one monomer is responsible for RNA recognition and catalysis, while the other monomer binds to the replacement base PreQ1. Requires Zn(2+) as cofactor.

It catalyses the reaction 7-aminomethyl-7-carbaguanine + guanosine(34) in tRNA = 7-aminomethyl-7-carbaguanosine(34) in tRNA + guanine. Its pathway is tRNA modification; tRNA-queuosine biosynthesis. In terms of biological role, catalyzes the base-exchange of a guanine (G) residue with the queuine precursor 7-aminomethyl-7-deazaguanine (PreQ1) at position 34 (anticodon wobble position) in tRNAs with GU(N) anticodons (tRNA-Asp, -Asn, -His and -Tyr). Catalysis occurs through a double-displacement mechanism. The nucleophile active site attacks the C1' of nucleotide 34 to detach the guanine base from the RNA, forming a covalent enzyme-RNA intermediate. The proton acceptor active site deprotonates the incoming PreQ1, allowing a nucleophilic attack on the C1' of the ribose to form the product. After dissociation, two additional enzymatic reactions on the tRNA convert PreQ1 to queuine (Q), resulting in the hypermodified nucleoside queuosine (7-(((4,5-cis-dihydroxy-2-cyclopenten-1-yl)amino)methyl)-7-deazaguanosine). The polypeptide is Queuine tRNA-ribosyltransferase (Haemophilus influenzae (strain ATCC 51907 / DSM 11121 / KW20 / Rd)).